The primary structure comprises 66 residues: UPF0457 protein BA_2525/GBAA_2525/BAS2348 (66 aa).

The protein belongs to the UPF0457 family.

This chain is UPF0457 protein BA_2525/GBAA_2525/BAS2348, found in Bacillus anthracis.